The primary structure comprises 505 residues: Glutamate--tRNA ligase (505 aa).

A 'HIGH' region motif is present at residues 16–26; the sequence is PSPTGFPHVGT. Residues 257-261 carry the 'KMSKS' region motif; the sequence is KLSKR. K260 contacts ATP.

This sequence belongs to the class-I aminoacyl-tRNA synthetase family. Glutamate--tRNA ligase type 1 subfamily. In terms of assembly, monomer.

The protein resides in the cytoplasm. It carries out the reaction tRNA(Glu) + L-glutamate + ATP = L-glutamyl-tRNA(Glu) + AMP + diphosphate. Functionally, catalyzes the attachment of glutamate to tRNA(Glu) in a two-step reaction: glutamate is first activated by ATP to form Glu-AMP and then transferred to the acceptor end of tRNA(Glu). This is Glutamate--tRNA ligase from Psychrobacter sp. (strain PRwf-1).